We begin with the raw amino-acid sequence, 328 residues long: Tetraacyldisaccharide 4'-kinase (328 aa).

55–62 (TAGGNGKT) contributes to the ATP binding site.

The protein belongs to the LpxK family.

It catalyses the reaction a lipid A disaccharide + ATP = a lipid IVA + ADP + H(+). It functions in the pathway glycolipid biosynthesis; lipid IV(A) biosynthesis; lipid IV(A) from (3R)-3-hydroxytetradecanoyl-[acyl-carrier-protein] and UDP-N-acetyl-alpha-D-glucosamine: step 6/6. Transfers the gamma-phosphate of ATP to the 4'-position of a tetraacyldisaccharide 1-phosphate intermediate (termed DS-1-P) to form tetraacyldisaccharide 1,4'-bis-phosphate (lipid IVA). In Shigella boydii serotype 18 (strain CDC 3083-94 / BS512), this protein is Tetraacyldisaccharide 4'-kinase.